The chain runs to 391 residues: Chaperone protein DnaJ (391 aa).

The J domain maps to 2–67 (DYYDVLGVSK…QKRESYDRYG (66 aa)). The CR-type zinc-finger motif lies at 148 to 226 (GVKKELLVSG…CRGQGRIKDK (79 aa)). 8 residues coordinate Zn(2+): C161, C164, C178, C181, C200, C203, C214, and C217. CXXCXGXG motif repeat units lie at residues 161-168 (CETCSGSG), 178-185 (CDRCKGSG), 200-207 (CPECGGEG), and 214-221 (CSSCRGQG).

The protein belongs to the DnaJ family. As to quaternary structure, homodimer. Requires Zn(2+) as cofactor.

The protein resides in the cytoplasm. In terms of biological role, participates actively in the response to hyperosmotic and heat shock by preventing the aggregation of stress-denatured proteins and by disaggregating proteins, also in an autonomous, DnaK-independent fashion. Unfolded proteins bind initially to DnaJ; upon interaction with the DnaJ-bound protein, DnaK hydrolyzes its bound ATP, resulting in the formation of a stable complex. GrpE releases ADP from DnaK; ATP binding to DnaK triggers the release of the substrate protein, thus completing the reaction cycle. Several rounds of ATP-dependent interactions between DnaJ, DnaK and GrpE are required for fully efficient folding. Also involved, together with DnaK and GrpE, in the DNA replication of plasmids through activation of initiation proteins. The chain is Chaperone protein DnaJ from Chlamydia abortus (strain DSM 27085 / S26/3) (Chlamydophila abortus).